An 881-amino-acid chain; its full sequence is MAASGGEGSRDVRAPGPPPQQPGARPAVRFRDEAFLNFTSMHGVQPIIARIRELSQQQLDVTQVPRLQWFRDVAALEVPTGLPLREFPFAAYLITGNAGSGKSTCVQTLNEVLDCVVTGATRIAAQNMYVKLSGAFLSRPINTIFHEFGFRGNHVQAQLGQHPYTLASSPASLEDLQRRDLTYYWEVILDITKRALAAHGGEDARNEFHALTALEQTLGLGQGALTRLASVTHGALPAFTRSNIIVIDEAGLLGRHLLTTVVYCWWMINALYHTPQYAGRLRPVLVCVGSPTQTASLESTFEHQKLRCSVRQSENVLTYLICNRTLREYTRLSHSWAIFINNKRCVEHEFGNLMKVLEYGLPITEEHMQFVDRFVVPESYITNPANLPGWTRLFSSHKEVSAYMAKLHAYLKVTREGEFVVFTLPVLTFVSVKEFDEYRRLTQQPTLTMEKWITANASRITNYSQSQDQDAGHVRCEVHSKQQLVVARNDITYVLNSQVAVTARLRKMVFGFDGTFRTFEAVLRDDSFVKTQGETSVEFAYRFLSRLMFGGLIHFYNFLQRPGLDATQRTLAYGRLGELTAELLSLRRDAAGASATRAADTSDRSPGERAFNFKHLGPRDGGPDDFPDDDLDVIFAGLDEQQLDVFYCHYALEEPETTAAVHAQFGLLKRAFLGRYLILRELFGEVFESAPFSTYVDNVIFRGCELLTGSPRGGLMSVALQTDNYTLMGYTYTRVFAFAEELRRRHATAGVAEFLEESPLPYIVLRDQHGFMSVVNTNISEFVESIDSTELAMAINADYGISSKLAMTITRSQGLSLDKVAICFTPGNLRLNSAYVAMSRTTSSEFLHMNLNPLRERHERDDVISEHILSALRDPNVVIVY.

A disordered region spans residues 1-26 (MAASGGEGSRDVRAPGPPPQQPGARP). 96 to 103 (GNAGSGKS) is an ATP binding site.

Belongs to the herpesviridae helicase family. As to quaternary structure, associates with the primase and the primase-associated factor to form the helicase-primase complex.

It localises to the host nucleus. Component of the helicase/primase complex. Unwinds the DNA at the replication forks and generates single-stranded DNA for both leading and lagging strand synthesis. The primase synthesizes short RNA primers on the lagging strand that the polymerase elongates using dNTPs. Possesses helicase-like motifs and therefore may act as the helicase subunit of the complex. This is DNA replication helicase from Human herpesvirus 2 (strain HG52) (HHV-2).